The sequence spans 452 residues: tRNA modification GTPase MnmE (452 aa).

3 residues coordinate (6S)-5-formyl-5,6,7,8-tetrahydrofolate: R25, E82, and R125. The 154-residue stretch at 221–374 folds into the TrmE-type G domain; it reads GLHVVLAGKP…LRARLLALAG (154 aa). A K(+)-binding site is contributed by N231. GTP contacts are provided by residues 231 to 236, 250 to 256, 275 to 278, and 355 to 357; these read NVGKSS, TPIAGTT, DTAG, and SAR. S235 contacts Mg(2+). K(+)-binding residues include T250, I252, and T255. Residue T256 coordinates Mg(2+). Residue K452 participates in (6S)-5-formyl-5,6,7,8-tetrahydrofolate binding.

It belongs to the TRAFAC class TrmE-Era-EngA-EngB-Septin-like GTPase superfamily. TrmE GTPase family. As to quaternary structure, homodimer. Heterotetramer of two MnmE and two MnmG subunits. It depends on K(+) as a cofactor.

The protein resides in the cytoplasm. Exhibits a very high intrinsic GTPase hydrolysis rate. Involved in the addition of a carboxymethylaminomethyl (cmnm) group at the wobble position (U34) of certain tRNAs, forming tRNA-cmnm(5)s(2)U34. The sequence is that of tRNA modification GTPase MnmE from Bordetella petrii (strain ATCC BAA-461 / DSM 12804 / CCUG 43448).